The sequence spans 334 residues: Mediator of RNA polymerase II transcription subunit 4 (334 aa).

The stretch at 71–100 (QEREQLIRTLEAHVEKRDEVIQQLETNLKS) forms a coiled coil. The disordered stretch occupies residues 193-334 (PLITSPSASS…ASKKTGSSNK (142 aa)). Composition is skewed to polar residues over residues 194 to 206 (LITS…SNGG) and 251 to 282 (NEKQ…SSPN).

It belongs to the Mediator complex subunit 4 family. Component of the Mediator complex.

The protein localises to the nucleus. Component of the Mediator complex, a coactivator involved in the regulated transcription of nearly all RNA polymerase II-dependent genes. Mediator functions as a bridge to convey information from gene-specific regulatory proteins to the basal RNA polymerase II transcription machinery. Mediator is recruited to promoters by direct interactions with regulatory proteins and serves as a scaffold for the assembly of a functional preinitiation complex with RNA polymerase II and the general transcription factors. In Caenorhabditis elegans, this protein is Mediator of RNA polymerase II transcription subunit 4 (mdt-4).